Here is a 142-residue protein sequence, read N- to C-terminus: Large ribosomal subunit protein uL11 (142 aa).

Alanine 2 is modified (n,N,N-trimethylalanine). An N6,N6,N6-trimethyllysine mark is found at lysine 4 and lysine 40.

The protein belongs to the universal ribosomal protein uL11 family. Part of the ribosomal stalk of the 50S ribosomal subunit. Interacts with L10 and the large rRNA to form the base of the stalk. L10 forms an elongated spine to which L12 dimers bind in a sequential fashion forming a multimeric L10(L12)X complex. Post-translationally, one or more lysine residues are methylated.

Forms part of the ribosomal stalk which helps the ribosome interact with GTP-bound translation factors. The sequence is that of Large ribosomal subunit protein uL11 from Shigella flexneri.